The primary structure comprises 411 residues: MTKRPLGLGKKNKQKRHKPDEGADGKKESTPLDQIHVEVEGGGDPEDSVVQLKALWRNYLQSEREDERVLNGIVHECDRLLRNREQEGIELGEDFHSIYALALSELAIFRTEEKGQAGRESVGEFFDAAAERVDMGLQHFPASDVLALAKAKIIFQRIPLQYVSQLSPNNSEGADVGLQQLLEEGKSSFRVVAQDPLAVSEPLEIFSDLLEIIANFGREDEIDEGLDSDAEDEPEEVELPESHPLYELRQHLPEHAEWLQQQLLALFKVLEKPNAEEEESEATKFYRKIANKLGQSYLDAAAEPSIVFTTLTYETEDPSAEDEQKAQEAQRVAQGLTERAIEFFKEAESADDPQTWVDTAEVFISLGNLQENESETQEMLYKQAEEKMVRANKATNGKYKHILDTLLDSKT.

A disordered region spans residues 1 to 45 (MTKRPLGLGKKNKQKRHKPDEGADGKKESTPLDQIHVEVEGGGDP). Over residues 18–39 (KPDEGADGKKESTPLDQIHVEV) the composition is skewed to basic and acidic residues.

The protein belongs to the ETT1 family.

It is found in the nucleus. In terms of biological role, required for correct translation termination and probably involved in regulation of hypoxic gene expression. This is Enhancer of translation termination 1 (ETT1) from Eremothecium gossypii (strain ATCC 10895 / CBS 109.51 / FGSC 9923 / NRRL Y-1056) (Yeast).